Consider the following 56-residue polypeptide: Large ribosomal subunit protein bL32 (56 aa).

Residues 1–37 (MAVQQNKKSRSKRGMRRSHDALSTAQLSVDATSGELH) are disordered. Residues 7–16 (KKSRSKRGMR) show a composition bias toward basic residues. Polar residues predominate over residues 21–31 (ALSTAQLSVDA).

The protein belongs to the bacterial ribosomal protein bL32 family.

This chain is Large ribosomal subunit protein bL32, found in Shewanella loihica (strain ATCC BAA-1088 / PV-4).